A 463-amino-acid chain; its full sequence is MAKDMDTIVSLAKHRGFVFPGSDIYGGLSNTWDYGPLGVELKNNVKKAWWQKFITQSPFNVGIDAAILMNPKVWEASGHLNNFNDPMIDNKDSKIRYRADKLIEDYMQDVKGDENFIADGLSFEQMKKIIDDEGIVCPVSKTANWTEIRQFNLMFKTFQGVTEDSTNEIFLRPETAQGIFVNYKNVQRSMRKKLPFGIGQIGKSFRNEITPGNFIFRTREFEQMELEFFCKPGEEIEWQNYWKTFASDWLTSLNMSSENMRLRDHDEDELSHYSNATTDIEYKFPFGWGELWGIASRTDFDLRKHAEHSGEDFRYHDPETNEKYIPYCIEPSLGADRVTLAFLCDAYDEEGVEGSKDARTVLHFHPALAPYKAAILPLSKKLSGEAIKIFEQLSSKFSIDFDESQSIGKRYRRQDEIGTPYCVTFDFDSLEDNQVTVRDRDSMEQVRMPISELEAFLTEKTKF.

2 residues coordinate substrate: R98 and E174. ATP contacts are provided by residues 206–208 (RNE), 216–221 (FRTREF), 290–291 (EL), and 334–337 (GADR). 221–225 (FEQME) serves as a coordination point for substrate. Residue 330-334 (EPSLG) coordinates substrate.

It belongs to the class-II aminoacyl-tRNA synthetase family. In terms of assembly, homodimer.

It localises to the cytoplasm. The enzyme catalyses tRNA(Gly) + glycine + ATP = glycyl-tRNA(Gly) + AMP + diphosphate. In terms of biological role, catalyzes the attachment of glycine to tRNA(Gly). The sequence is that of Glycine--tRNA ligase from Staphylococcus aureus (strain Mu50 / ATCC 700699).